The sequence spans 132 residues: uncharacterized protein (132 aa).

The disordered stretch occupies residues 17–75 (RSAVPRWPHLSSQSGVEPPDRWTGTPGWPSRDQEAPGSMMPPAAAQPSAHGALVPPATA). Residues 51 to 65 (APGSMMPPAAAQPSA) are compositionally biased toward low complexity.

As to expression, expressed exclusively in heart.

It is found in the cytoplasm. This is an uncharacterized protein from Homo sapiens (Human).